A 129-amino-acid chain; its full sequence is UPF0102 protein Ctha_1382 (129 aa).

This sequence belongs to the UPF0102 family.

The protein is UPF0102 protein Ctha_1382 of Chloroherpeton thalassium (strain ATCC 35110 / GB-78).